The primary structure comprises 510 residues: NAD(P)H-quinone oxidoreductase subunit 2 B, chloroplastic (510 aa).

The next 13 membrane-spanning stretches (helical) occupy residues 24 to 44 (LLLF…GLIL), 57 to 77 (IPWL…ALLF), 99 to 119 (IFQF…VEYI), 124 to 144 (MAIT…MFLC), 149 to 169 (LITI…LSGY), 183 to 203 (YLLM…WLYG), 227 to 247 (PGIS…LSLA), 295 to 315 (WHLL…LIAI), 323 to 343 (MLAY…IVGD), 354 to 374 (YMLF…LFGL), 395 to 415 (ALSL…AGFF), 418 to 438 (LHLF…IGLL), and 482 to 502 (LSMI…NPIV).

Belongs to the complex I subunit 2 family. NDH is composed of at least 16 different subunits, 5 of which are encoded in the nucleus.

It is found in the plastid. The protein resides in the chloroplast thylakoid membrane. It carries out the reaction a plastoquinone + NADH + (n+1) H(+)(in) = a plastoquinol + NAD(+) + n H(+)(out). The catalysed reaction is a plastoquinone + NADPH + (n+1) H(+)(in) = a plastoquinol + NADP(+) + n H(+)(out). Its function is as follows. NDH shuttles electrons from NAD(P)H:plastoquinone, via FMN and iron-sulfur (Fe-S) centers, to quinones in the photosynthetic chain and possibly in a chloroplast respiratory chain. The immediate electron acceptor for the enzyme in this species is believed to be plastoquinone. Couples the redox reaction to proton translocation, and thus conserves the redox energy in a proton gradient. The polypeptide is NAD(P)H-quinone oxidoreductase subunit 2 B, chloroplastic (Manihot esculenta (Cassava)).